The chain runs to 92 residues: Cell division topological specificity factor (92 aa).

Belongs to the MinE family.

In terms of biological role, prevents the cell division inhibition by proteins MinC and MinD at internal division sites while permitting inhibition at polar sites. This ensures cell division at the proper site by restricting the formation of a division septum at the midpoint of the long axis of the cell. This chain is Cell division topological specificity factor, found in Symbiobacterium thermophilum (strain DSM 24528 / JCM 14929 / IAM 14863 / T).